Consider the following 562-residue polypeptide: MQFDYIIIGAGSAGNVLATRLTEDPNTSVLLLEAGGPDYRFDFRTQMPAALAFPLQGKRYNWAYETEPEPFMNNRRMECGRGKGLGGSSLINGMCYIRGNAMDLDNWAKEPGLENWSYLDCLPYYRKAETRDVGENDYHGGDGPVSVTTSKPGVNPLFEAMIEAGVQAGYPRTDDLNGYQQEGFGPMDRTVTPQGRRASTARGYLDQAKSRPNLTIRTHAMTDHIIFDCKRAVGVEWLEGDSTIPTRATANKEVLLCAGAIASPQILQRSGVGNAELLAEFDIPLVHDLPGVGENLQDHLEMYLQYECKEPVSLYPALQWWNQPKIGAEWLFGGTGVGASNHFEAGGFIRSREEFAWPNIQYHFLPVAINYNGSNAVKEHGFQCHVGSMRSPSRGHVRIKSRDPHQHPAILFNYMSHEQDWQEFRDAIRITREIMHQPALDQYRGREISPGTECQTDEQLDEFVRNHAETAFHPCGTCKMGYDEMSVVDGEGRVHGLEGLRVVDASIMPQIITGNLNATTIMIGEKMADMIRGKEALPRSTAGYFVANGMPVRAKKMSRDLN.

4–33 (DYIIIGAGSAGNVLATRLTEDPNTSVLLLE) contributes to the FAD binding site. Residue histidine 473 is the Proton acceptor of the active site.

This sequence belongs to the GMC oxidoreductase family. FAD is required as a cofactor.

The protein resides in the cell membrane. The enzyme catalyses choline + A = betaine aldehyde + AH2. It carries out the reaction betaine aldehyde + NAD(+) + H2O = glycine betaine + NADH + 2 H(+). It functions in the pathway amine and polyamine biosynthesis; betaine biosynthesis via choline pathway; betaine aldehyde from choline (cytochrome c reductase route): step 1/1. Its function is as follows. Involved in the biosynthesis of the osmoprotectant glycine betaine. Catalyzes the oxidation of choline to betaine aldehyde and betaine aldehyde to glycine betaine at the same rate. This chain is Oxygen-dependent choline dehydrogenase, found in Escherichia coli O157:H7.